The primary structure comprises 138 residues: MAKEYSRTQRIGDQMQRELAQLIRREIKDPRVGLVTITAVDVSRDVGHAKIFMTVMGQDSAEEIAQTIKVLNSAAGFLRMQLAREMKLRSVPQLHFHYDESVVRGAHLSALIERAVAEDGQHQEGPASADAKPESTEE.

The interval 117-138 is disordered; the sequence is AEDGQHQEGPASADAKPESTEE.

Belongs to the RbfA family. As to quaternary structure, monomer. Binds 30S ribosomal subunits, but not 50S ribosomal subunits or 70S ribosomes.

It localises to the cytoplasm. Its function is as follows. One of several proteins that assist in the late maturation steps of the functional core of the 30S ribosomal subunit. Associates with free 30S ribosomal subunits (but not with 30S subunits that are part of 70S ribosomes or polysomes). Required for efficient processing of 16S rRNA. May interact with the 5'-terminal helix region of 16S rRNA. This Pseudomonas syringae pv. syringae (strain B728a) protein is Ribosome-binding factor A.